We begin with the raw amino-acid sequence, 192 residues long: Inosine triphosphate pyrophosphatase (192 aa).

10–15 is an ITP binding site; it reads TGNANK. Glutamate 43 contributes to the Mg(2+) binding site. Residues lysine 56, 74–75, lysine 91, 149–152, lysine 173, and 178–179 each bind ITP; these read DT, FGWD, and HR.

Belongs to the HAM1 NTPase family. In terms of assembly, homodimer. The cofactor is Mg(2+). It depends on Mn(2+) as a cofactor.

The protein localises to the cytoplasm. It is found in the nucleus. It catalyses the reaction ITP + H2O = IMP + diphosphate + H(+). It carries out the reaction dITP + H2O = dIMP + diphosphate + H(+). The catalysed reaction is XTP + H2O = XMP + diphosphate + H(+). Functionally, pyrophosphatase that hydrolyzes non-canonical purine nucleotides such as inosine triphosphate (ITP), deoxyinosine triphosphate (dITP) or xanthosine 5'-triphosphate (XTP) to their respective monophosphate derivatives. The enzyme does not distinguish between the deoxy- and ribose forms. Probably excludes non-canonical purines from RNA and DNA precursor pools, thus preventing their incorporation into RNA and DNA and avoiding chromosomal lesions. This is Inosine triphosphate pyrophosphatase from Candida glabrata (strain ATCC 2001 / BCRC 20586 / JCM 3761 / NBRC 0622 / NRRL Y-65 / CBS 138) (Yeast).